We begin with the raw amino-acid sequence, 532 residues long: All-trans-retinyl ester 13-cis isomerohydrolase (532 aa).

Cys112 carries S-palmitoyl cysteine; in membrane form lipidation. The Fe cation site is built by His180, His241, and His313. Residue Cys329 is the site of S-palmitoyl cysteine; in membrane form attachment. A Fe cation-binding site is contributed by His527.

This sequence belongs to the carotenoid oxygenase family. The cofactor is Fe(2+). In terms of processing, palmitoylated. In terms of tissue distribution, predominantly expressed in brain. Expressed at a low level in the eye.

Its subcellular location is the cytoplasm. It is found in the cell membrane. It catalyses the reaction an all-trans-retinyl ester + H2O = 13-cis-retinol + a fatty acid + H(+). It carries out the reaction lutein = (3R,3'S)-zeaxanthin. Its function is as follows. Specifically generates 13-cis retinol, a stereoisomeric form of retinoic acid. Capable of catalyzing the isomerization of lutein to meso-zeaxanthin an eye-specific carotenoid. This chain is All-trans-retinyl ester 13-cis isomerohydrolase (rpe65b), found in Danio rerio (Zebrafish).